Here is a 295-residue protein sequence, read N- to C-terminus: Protein gurken (295 aa).

The first 26 residues, 1–26 (MMQIPFTRIFKVIFVLSTIVAVTDCC), serve as a signal peptide directing secretion. At 27-247 (SSRILLLREH…TAQRKVRMAH (221 aa)) the chain is on the extracellular side. Disordered stretches follow at residues 78-111 (EASA…SIAA) and 124-175 (TDTW…NDKE). The segment covering 124–139 (TDTWLASESSTPITDS) has biased composition (polar residues). Low complexity-rich tracts occupy residues 140–152 (ETVT…THTG) and 159–171 (SSSS…TPSP). One can recognise an EGF-like domain in the interval 179 to 224 (QMLPCSEAYNTSFCLNGGHCFQHPMVNNTVFHSCLCVNDYDGERCA). Disulfide bonds link cysteine 183/cysteine 198, cysteine 192/cysteine 212, and cysteine 214/cysteine 223. N-linked (GlcNAc...) asparagine glycans are attached at residues asparagine 188 and asparagine 205. Residues 215–245 (VNDYDGERCAYKSWNGDYIYSPPTAQRKVRM) form an interaction with cni region. Residues 248–268 (IVFSFPVLLMLSSLYVLFAAV) form a helical membrane-spanning segment. The Cytoplasmic segment spans residues 269–295 (FMLRNVPDYRRKQQQLHLHKQRFFVRC).

Interacts with cni. Expressed in nurse cells and oocyte up to oogenesis stage 7. Specifically accumulates in dorsal anterior corner of the oocyte during stages 9/10, at later stages expression is seen as an anterior ring. In stage 10 ovaries, it is concentrated between the oocyte nucleus and the adjacent oolemma. During vitellogenesis stage it can be detected at the oocyte surface, especially on the microvilli. It is also found at the microvilli covering the apical surface of the follicular epithelium and within follicle cells.

The protein resides in the cell membrane. Critical for defining the anterior-posterior and dorsal-ventral axes of the egg. May signal directly to dorsal follicle cells through the receptor torpedo (top). During oogenesis this signaling pathway instructs follicle cells to follow a dorsal pathway of development rather than the default ventral pathway. In Drosophila melanogaster (Fruit fly), this protein is Protein gurken (grk).